Consider the following 546-residue polypeptide: Chaperonin GroEL (546 aa).

Residues 30-33 (TLGP), Lys-51, 87-91 (DGTTT), Gly-415, 479-481 (NAA), and Asp-495 each bind ATP. Positions 527-546 (EEKPDVSASSGGMGGMGGMM) are disordered. Residues 537 to 546 (GGMGGMGGMM) are compositionally biased toward gly residues.

Belongs to the chaperonin (HSP60) family. In terms of assembly, forms a cylinder of 14 subunits composed of two heptameric rings stacked back-to-back. Interacts with the co-chaperonin GroES.

It is found in the cytoplasm. It catalyses the reaction ATP + H2O + a folded polypeptide = ADP + phosphate + an unfolded polypeptide.. In terms of biological role, together with its co-chaperonin GroES, plays an essential role in assisting protein folding. The GroEL-GroES system forms a nano-cage that allows encapsulation of the non-native substrate proteins and provides a physical environment optimized to promote and accelerate protein folding. This Baumannia cicadellinicola subsp. Homalodisca coagulata protein is Chaperonin GroEL.